Reading from the N-terminus, the 229-residue chain is Juvenile hormone-binding protein (229 aa).

An N-terminal signal peptide occupies residues 1 to 3 (VLS).

The protein localises to the secreted. In terms of biological role, prevents juvenile hormone from being hydrolyzed by general esterases by combining with it specifically. This Manduca sexta (Tobacco hawkmoth) protein is Juvenile hormone-binding protein (JHBP).